We begin with the raw amino-acid sequence, 370 residues long: UDP-N-acetylglucosamine--N-acetylmuramyl-(pentapeptide) pyrophosphoryl-undecaprenol N-acetylglucosamine transferase (370 aa).

UDP-N-acetyl-alpha-D-glucosamine-binding positions include 20–22 (TAG), Asn134, Arg170, Ser204, Ile257, and Gln301.

It belongs to the glycosyltransferase 28 family. MurG subfamily.

It is found in the cell membrane. The enzyme catalyses di-trans,octa-cis-undecaprenyl diphospho-N-acetyl-alpha-D-muramoyl-L-alanyl-D-glutamyl-meso-2,6-diaminopimeloyl-D-alanyl-D-alanine + UDP-N-acetyl-alpha-D-glucosamine = di-trans,octa-cis-undecaprenyl diphospho-[N-acetyl-alpha-D-glucosaminyl-(1-&gt;4)]-N-acetyl-alpha-D-muramoyl-L-alanyl-D-glutamyl-meso-2,6-diaminopimeloyl-D-alanyl-D-alanine + UDP + H(+). Its pathway is cell wall biogenesis; peptidoglycan biosynthesis. Functionally, cell wall formation. Catalyzes the transfer of a GlcNAc subunit on undecaprenyl-pyrophosphoryl-MurNAc-pentapeptide (lipid intermediate I) to form undecaprenyl-pyrophosphoryl-MurNAc-(pentapeptide)GlcNAc (lipid intermediate II). The chain is UDP-N-acetylglucosamine--N-acetylmuramyl-(pentapeptide) pyrophosphoryl-undecaprenol N-acetylglucosamine transferase from Corynebacterium jeikeium (strain K411).